The chain runs to 209 residues: Regulator of G-protein signaling 1 (209 aa).

One can recognise an RGS domain in the interval 85–200 (SLEKLLANQT…LKSDIYLNLL (116 aa)).

As to quaternary structure, interacts with GNAI1 and GNAQ. Detected in peripheral blood monocytes. Expression is relatively low in B-cells and chronic lymphocytic leukemia B-cells; however, in other types of malignant B-cell such as non-Hodgkin lymphoma and hairy cell leukemia, expression is constitutively high.

The protein localises to the cell membrane. Its subcellular location is the cytoplasm. The protein resides in the cytosol. In terms of biological role, regulates G protein-coupled receptor signaling cascades, including signaling downstream of the N-formylpeptide chemoattractant receptors and leukotriene receptors. Inhibits B cell chemotaxis toward CXCL12. Inhibits signal transduction by increasing the GTPase activity of G protein alpha subunits thereby driving them into their inactive GDP-bound form. This chain is Regulator of G-protein signaling 1 (RGS1), found in Homo sapiens (Human).